The sequence spans 182 residues: 5-formyltetrahydrofolate cyclo-ligase (182 aa).

Residues 1-21 (MIRQRRRALTPEQQQEMGQQA) are disordered. The span at 11 to 21 (PEQQQEMGQQA) shows a compositional bias: polar residues. Residues 128–135 (GMGGGFYD) and Asp-167 each bind ATP.

Belongs to the 5-formyltetrahydrofolate cyclo-ligase family.

The catalysed reaction is (6S)-5-formyl-5,6,7,8-tetrahydrofolate + ATP = (6R)-5,10-methenyltetrahydrofolate + ADP + phosphate. It participates in one-carbon metabolism; tetrahydrofolate interconversion. In terms of biological role, involved in the removal of 5-formyltetrahydrofolate. In vitro, it is a potent inhibitor of various folate-dependent enzymes in the C1 metabolism network and in vivo it might function as a folate storage. 5-formyltetrahydrofolate is also used as an antifolate rescue agent in cancer chemotherapy. Catalyzes the irreversible ATP-dependent transformation of 5-formyltetrahydrofolate (5-CHO-THF) to form 5,10-methenyltetrahydrofolate (5,10-CH=THF). The reverse reaction is catalyzed by the serine hydroxymethyltransferase GlyA (SHMT). The sequence is that of 5-formyltetrahydrofolate cyclo-ligase (ygfA) from Escherichia coli O157:H7.